Here is a 483-residue protein sequence, read N- to C-terminus: Protein nucleotidyltransferase YdiU (483 aa).

ATP-binding residues include Gly81, Gly83, Arg84, Lys103, Asp115, Gly116, Arg166, and Arg173. The active-site Proton acceptor is Asp244. Residues Asn245 and Asp254 each coordinate Mg(2+). Asp254 is an ATP binding site.

Belongs to the SELO family. The cofactor is Mg(2+). Mn(2+) is required as a cofactor.

It catalyses the reaction L-seryl-[protein] + ATP = 3-O-(5'-adenylyl)-L-seryl-[protein] + diphosphate. It carries out the reaction L-threonyl-[protein] + ATP = 3-O-(5'-adenylyl)-L-threonyl-[protein] + diphosphate. The catalysed reaction is L-tyrosyl-[protein] + ATP = O-(5'-adenylyl)-L-tyrosyl-[protein] + diphosphate. The enzyme catalyses L-histidyl-[protein] + UTP = N(tele)-(5'-uridylyl)-L-histidyl-[protein] + diphosphate. It catalyses the reaction L-seryl-[protein] + UTP = O-(5'-uridylyl)-L-seryl-[protein] + diphosphate. It carries out the reaction L-tyrosyl-[protein] + UTP = O-(5'-uridylyl)-L-tyrosyl-[protein] + diphosphate. Functionally, nucleotidyltransferase involved in the post-translational modification of proteins. It can catalyze the addition of adenosine monophosphate (AMP) or uridine monophosphate (UMP) to a protein, resulting in modifications known as AMPylation and UMPylation. This is Protein nucleotidyltransferase YdiU from Shewanella halifaxensis (strain HAW-EB4).